We begin with the raw amino-acid sequence, 113 residues long: Stigma/stylar cysteine-rich adhesin (113 aa).

The first 22 residues, 1–22, serve as a signal peptide directing secretion; the sequence is MARSSAVCFLLLLAFLIGTASA. 4 disulfide bridges follow: Cys25-Cys72, Cys35-Cys49, Cys50-Cys95, and Cys70-Cys109.

It belongs to the plant LTP family. In terms of tissue distribution, highly expressed in style and stigma, abundant in young leaves and petals, and low expression in young anthers at pollen mother cell stage with an active tapetum. Not expressed in mature leaves or in pollen grains or tubes. Found in the stylar transmitting tract epidermis and in the stylar extracellular matrix.

Functionally, acts as an adhesive agent between the pollen tube wall and the stylar transmitting tract epidermis. Binds a stylar pectin in a pH-dependent manner. Enhances activity of chemocyanin, a diffusible chemotropic factor. In Lilium longiflorum (Trumpet lily), this protein is Stigma/stylar cysteine-rich adhesin (SCA).